The chain runs to 405 residues: Probable tRNA sulfurtransferase (405 aa).

The THUMP domain maps to 60–165 (DKVMGRLKLV…LNGIFLSSET (106 aa)). ATP-binding positions include 183–184 (ML), 208–209 (HF), Arg-265, Gly-287, and Gln-296.

This sequence belongs to the ThiI family.

The protein localises to the cytoplasm. It carries out the reaction [ThiI sulfur-carrier protein]-S-sulfanyl-L-cysteine + a uridine in tRNA + 2 reduced [2Fe-2S]-[ferredoxin] + ATP + H(+) = [ThiI sulfur-carrier protein]-L-cysteine + a 4-thiouridine in tRNA + 2 oxidized [2Fe-2S]-[ferredoxin] + AMP + diphosphate. The catalysed reaction is [ThiS sulfur-carrier protein]-C-terminal Gly-Gly-AMP + S-sulfanyl-L-cysteinyl-[cysteine desulfurase] + AH2 = [ThiS sulfur-carrier protein]-C-terminal-Gly-aminoethanethioate + L-cysteinyl-[cysteine desulfurase] + A + AMP + 2 H(+). It participates in cofactor biosynthesis; thiamine diphosphate biosynthesis. In terms of biological role, catalyzes the ATP-dependent transfer of a sulfur to tRNA to produce 4-thiouridine in position 8 of tRNAs, which functions as a near-UV photosensor. Also catalyzes the transfer of sulfur to the sulfur carrier protein ThiS, forming ThiS-thiocarboxylate. This is a step in the synthesis of thiazole, in the thiamine biosynthesis pathway. The sulfur is donated as persulfide by IscS. This is Probable tRNA sulfurtransferase from Lactiplantibacillus plantarum (strain ATCC BAA-793 / NCIMB 8826 / WCFS1) (Lactobacillus plantarum).